Consider the following 449-residue polypeptide: MDARISPEIPGIIQPGNVTQDLKMLVCKLLNSPKPSKTFPGSQPVSFQHSDIRDKLVAQDYYVCEKTDGLRVLMLVVVNPITGEQGCFMIDRENNYYLVNGFHFPRLPQKKKEELLETSQNGTLIDGELVIQKNPMTKLQELRYLMFDCLAINGRSLVQSPTSSRLAHLGKEFYKPYYDLRSIYPDKCATFPFKLSMKHMDFSYSLVKVANSLDKLPHLSDGLIFTPVRTPYAVGGKDSLLLKWKPEQENSVDFKLILEIPMTEDNSVAKKDPRRWYYNYDAKPTFALYVWQGGSDVNTKLQNFEQPFDKREMQVLEKTYKRFAELSISDEQWQELKNLEEPLNGRIVECTKDPETGSWTMLRFRDDKLNGNHTSVVQKVLESISDSVTIDDLAESVPEIKSAWDERKNGAYQHHSSSFSESRQQPKAEPVAEKKQTEPKYVDDDDWSD.

Lys-66 acts as the N6-GMP-lysine intermediate in catalysis. The interval 405 to 449 (DERKNGAYQHHSSSFSESRQQPKAEPVAEKKQTEPKYVDDDDWSD) is disordered. Residues 414–423 (HHSSSFSESR) are compositionally biased toward polar residues. Residues 424 to 442 (QQPKAEPVAEKKQTEPKYV) show a composition bias toward basic and acidic residues.

It belongs to the eukaryotic GTase family. As to quaternary structure, heterodimer. The mRNA-capping enzyme is composed of two separate chains alpha and beta, respectively a mRNA guanylyltransferase and an mRNA 5'-triphosphate monophosphatase.

It localises to the nucleus. It catalyses the reaction a 5'-end diphospho-ribonucleoside in mRNA + GTP + H(+) = a 5'-end (5'-triphosphoguanosine)-ribonucleoside in mRNA + diphosphate. Second step of mRNA capping. Transfer of the GMP moiety of GTP to the 5'-end of RNA via an enzyme-GMP covalent reaction intermediate. This chain is mRNA-capping enzyme subunit alpha (CEG1), found in Candida glabrata (strain ATCC 2001 / BCRC 20586 / JCM 3761 / NBRC 0622 / NRRL Y-65 / CBS 138) (Yeast).